A 1253-amino-acid polypeptide reads, in one-letter code: Structural polyprotein (1253 aa).

The segment at 43-77 (VQAQQMQQLISAVSALTTKQNGKAPKKPKKKPQKA) is host transcription inhibition. Residues 58-110 (LTTKQNGKAPKKPKKKPQKAKAKKNEQQKKNENKKPPPKQKNPAKKKKPGKRE) are disordered. A compositionally biased stretch (basic residues) spans 66–79 (APKKPKKKPQKAKA). The short motif at 70-106 (PKKKPQKAKAKKNEQQKKNENKKPPPKQKNPAKKKKP) is the Nuclear localization signal element. Positions 80 to 92 (KKNEQQKKNENKK) are enriched in basic and acidic residues. The tract at residues 90–121 (NKKPPPKQKNPAKKKKPGKRERMCMKIENDCI) is binding to the viral RNA. Residues 93 to 108 (PPPKQKNPAKKKKPGK) show a composition bias toward basic residues. Residues 106–120 (PGKRERMCMKIENDC) form a ribosome-binding region. Cysteines 120 and 135 form a disulfide. The Peptidase S3 domain occupies 120-268 (CIFEVKLDGK…RYTPEGTEEW (149 aa)). Residue histidine 146 is the Charge relay system of the active site. Residues 151–161 (IDNPDLAKLTY) carry the Nuclear export signal motif. Residues 162-167 (KKSSKY) are interaction with spike glycoprotein E2. Residue aspartate 168 is the Charge relay system of the active site. A dimerization of the capsid protein region spans residues 190-200 (PEGHYNWHHGA). Catalysis depends on serine 220, which acts as the Charge relay system. A dimerization of the capsid protein region spans residues 226-230 (DNKGR). Positions 269-280 (SAALMMCVLANV) are functions as an uncleaved signal peptide for the precursor of protein E3/E2. 3 cysteine pairs are disulfide-bonded: cysteine 275/cysteine 284, cysteine 289/cysteine 293, and cysteine 292/cysteine 324. Asparagine 279 carries N-linked (GlcNAc...) asparagine; by host glycosylation. N-linked (GlcNAc...) asparagine; by host glycosylation occurs at asparagine 325. Residues 333–694 (SVTKHFNVYK…EIILYYYGLY (362 aa)) are Extracellular-facing. 6 disulfides stabilise this stretch: cysteine 351–cysteine 457, cysteine 354–cysteine 360, cysteine 423–cysteine 437, cysteine 485–cysteine 597, cysteine 533–cysteine 557, and cysteine 535–cysteine 552. Interaction with host Mxra8 receptor stretches follow at residues 358–361 (QFCY) and 394–396 (HEH). Residues 516 to 519 (QSGN) are interaction with host Mxra8 receptor. An N-linked (GlcNAc...) asparagine; by host glycan is attached at asparagine 532. The interaction with host Mxra8 receptor stretch occupies residues 548–554 (TINSCKI). N-linked (GlcNAc...) asparagine; by host glycosylation occurs at asparagine 594. The chain crosses the membrane as a helical span at residues 695–715 (PAATIAAVSAAGLAVVLSLLA). The Cytoplasmic portion of the chain corresponds to 716 to 754 (SCYMFATARRKCLTPYALTPGAVVPVTLGVLCCAPRAHA). A lipid anchor (S-stearoyl cysteine; by host) is attached at cysteine 717. Positions 722 to 726 (TARRK) are interaction with the capsid protein. Residue cysteine 727 is the site of S-stearoyl cysteine; by host attachment. The transient transmembrane before p62-6K protein processing stretch occupies residues 727–747 (CLTPYALTPGAVVPVTLGVLC). Cysteine 727 and cysteine 748 are joined by a disulfide. 2 S-palmitoyl cysteine; by host lipidation sites follow: cysteine 747 and cysteine 748. Residues 755–769 (ASFAESMAYLWDENQ) are Extracellular-facing. Residue asparagine 768 is glycosylated (N-linked (GlcNAc...) asparagine; by host). A helical transmembrane segment spans residues 770–790 (TLFWLELATPLAAIIILVCCL). The Cytoplasmic portion of the chain corresponds to 791–792 (KN). The chain crosses the membrane as a helical span at residues 793-813 (LLCCCKPLSFLVLVSLGTPVV). Extracellular-facing segments span residues 814-815 (KS) and 826-1227 (VGFP…WVQR). Disulfide bonds link cysteine 864/cysteine 929, cysteine 877/cysteine 909, cysteine 878/cysteine 911, and cysteine 883/cysteine 893. The interval 899 to 916 (VYPFMWGGAYCFCDTENT) is E1 fusion peptide loop. Asparagine 956 and asparagine 1085 each carry an N-linked (GlcNAc...) asparagine; by host glycan. Cystine bridges form between cysteine 1074–cysteine 1086, cysteine 1116–cysteine 1191, cysteine 1121–cysteine 1195, and cysteine 1143–cysteine 1185. The chain crosses the membrane as a helical span at residues 1228-1248 (VAGGLGGLTLAAVAVLILVTC). The S-palmitoyl cysteine; by host moiety is linked to residue cysteine 1248. Residues 1249 to 1253 (VTMRR) lie on the Cytoplasmic side of the membrane.

Homodimer. Homomultimer. Interacts with host karyopherin KPNA4; this interaction allows the nuclear import of the viral capsid protein. Interacts with spike glycoprotein E2. Interacts with host IRAK1; the interaction leads to inhibition of IRAK1-dependent signaling. As to quaternary structure, the precursor of protein E3/E2 and E1 form a heterodimer shortly after synthesis. In terms of assembly, interacts with spike glycoprotein E2. The precursor of protein E3/E2 and E1 form a heterodimer shortly after synthesis. Processing of the precursor of protein E3/E2 into E2 and E3 results in a heterodimer of the spike glycoproteins E2 and E1. Spike at virion surface are constituted of a trimer of E2-E1 heterodimers. After target cell attachment and endocytosis, E1 change conformation to form homotrimers. Interacts with 6K protein. E1/E2 heterodimer interacts with host LDLR. Interacts with spike glycoprotein E1. Processing of the precursor of protein E3/E2 into E2 and E3 results in a heterodimer of the spike glycoproteins E2 and E1. Spike at virion surface are constituted of a trimer of E2-E1 heterodimers. Interacts with 6K protein. Interacts with host MXRA8; this interaction mediates virus entry. As to quaternary structure, oligomer. Interacts with spike glycoprotein E1. Interacts with spike glycoprotein E2. Post-translationally, structural polyprotein: Specific enzymatic cleavages in vivo yield mature proteins. Capsid protein is auto-cleaved during polyprotein translation, unmasking a signal peptide at the N-terminus of the precursor of E3/E2. The remaining polyprotein is then targeted to the host endoplasmic reticulum, where host signal peptidase cleaves it into pE2, 6K and E1 proteins. pE2 is further processed to mature E3 and E2 by host furin in trans-Golgi vesicle. Palmitoylated via thioester bonds. These palmitoylations may induce disruption of the C-terminus transmembrane. This would result in the reorientation of E2 C-terminus from lumenal to cytoplasmic side. In terms of processing, N-glycosylated. Post-translationally, palmitoylated via thioester bonds.

The protein localises to the virion. Its subcellular location is the host cytoplasm. It localises to the host cell membrane. It is found in the host nucleus. The protein resides in the virion membrane. The protein localises to the host Golgi apparatus. Its subcellular location is the host trans-Golgi network. It localises to the host endoplasmic reticulum. It catalyses the reaction Autocatalytic release of the core protein from the N-terminus of the togavirus structural polyprotein by hydrolysis of a -Trp-|-Ser- bond.. In terms of biological role, forms an icosahedral capsid with a T=4 symmetry composed of 240 copies of the capsid protein surrounded by a lipid membrane through which penetrate 80 spikes composed of trimers of E1-E2 heterodimers. The capsid protein binds to the viral RNA genome at a site adjacent to a ribosome binding site for viral genome translation following genome release. Possesses a protease activity that results in its autocatalytic cleavage from the nascent structural protein. Following its self-cleavage, the capsid protein transiently associates with ribosomes, and within several minutes the protein binds to viral RNA and rapidly assembles into icosahedric core particles. The resulting nucleocapsid eventually associates with the cytoplasmic domain of the spike glycoprotein E2 at the cell membrane, leading to budding and formation of mature virions. In case of infection, new virions attach to target cells and after clathrin-mediated endocytosis their membrane fuses with the host endosomal membrane. This leads to the release of the nucleocapsid into the cytoplasm, followed by an uncoating event necessary for the genomic RNA to become accessible. The uncoating might be triggered by the interaction of capsid proteins with ribosomes. Binding of ribosomes would release the genomic RNA since the same region is genomic RNA-binding and ribosome-binding. Specifically inhibits interleukin-1 receptor-associated kinase 1/IRAK1-dependent signaling during viral entry, representing a means by which the alphaviruses may evade innate immune detection and activation prior to viral gene expression. Its function is as follows. Provides the signal sequence for the translocation of the precursor of protein E3/E2 to the host endoplasmic reticulum. Furin-cleaved E3 remains associated with spike glycoprotein E1 and mediates pH protection of the latter during the transport via the secretory pathway. After virion release from the host cell, the assembly protein E3 is gradually released in the extracellular space. Plays a role in viral attachment to target host cell, by binding to the cell receptor MXRA8. The host LDLR may also act as a cell receptor for viral entry. Synthesized as a p62 precursor which is processed by furin at the cell membrane just before virion budding, giving rise to E2-E1 heterodimer. The p62-E1 heterodimer is stable, whereas E2-E1 is unstable and dissociate at low pH. p62 is processed at the last step, presumably to avoid E1 fusion activation before its final export to cell surface. E2 C-terminus contains a transitory transmembrane that would be disrupted by palmitoylation, resulting in reorientation of the C-terminal tail from lumenal to cytoplasmic side. This step is critical since E2 C-terminus is involved in budding by interacting with capsid proteins. This release of E2 C-terminus in cytoplasm occurs lately in protein export, and precludes premature assembly of particles at the endoplasmic reticulum membrane. Functionally, acts as a viroporin that participates in virus glycoprotein processing and transport to the plasma membrane, cell permeabilization and budding of viral particles. Disrupts the calcium homeostasis of the cell, probably at the endoplasmic reticulum level. This leads to cytoplasmic calcium elevation. Because of its lipophilic properties, the 6K protein is postulated to influence the selection of lipids that interact with the transmembrane domains of the glycoproteins, which, in turn, affects the deformability of the bilayer required for the extreme curvature that occurs as budding proceeds. Present in low amount in virions, about 3% compared to viral glycoproteins. In terms of biological role, class II viral fusion protein. Fusion activity is inactive as long as E1 is bound to E2 in mature virion. After virus attachment to target cell via host MXRA8 and endocytosis, acidification of the endosome induce dissociation of E1/E2 heterodimer and concomitant trimerization of the E1 subunits. This E1 trimer is fusion active, and promotes release of viral nucleocapsid in cytoplasm after endosome and viral membrane fusion. Efficient fusion requires the presence of cholesterol and sphingolipid in the target membrane. This is Structural polyprotein from Aedes vexans (Inland floodwater mosquito).